Reading from the N-terminus, the 241-residue chain is Uridylate kinase (241 aa).

12–15 (KLSG) is a binding site for ATP. The segment at 20–25 (GDKGQG) is involved in allosteric activation by GTP. Gly54 is a binding site for UMP. Positions 55 and 59 each coordinate ATP. UMP-binding positions include Asp74 and 135-142 (TGSPYFST). ATP contacts are provided by Asn163, Tyr169, and Asp172.

The protein belongs to the UMP kinase family. Homohexamer.

It is found in the cytoplasm. The enzyme catalyses UMP + ATP = UDP + ADP. The protein operates within pyrimidine metabolism; CTP biosynthesis via de novo pathway; UDP from UMP (UMPK route): step 1/1. Allosterically activated by GTP. Inhibited by UTP. Its function is as follows. Catalyzes the reversible phosphorylation of UMP to UDP. The sequence is that of Uridylate kinase from Leuconostoc mesenteroides subsp. mesenteroides (strain ATCC 8293 / DSM 20343 / BCRC 11652 / CCM 1803 / JCM 6124 / NCDO 523 / NBRC 100496 / NCIMB 8023 / NCTC 12954 / NRRL B-1118 / 37Y).